The following is a 134-amino-acid chain: Histone-like protein Rv3852 (134 aa).

The segment covering 1–10 (MPDPQDRPDS) has biased composition (basic and acidic residues). The segment at 1-68 (MPDPQDRPDS…PAEAPVSLQQ (68 aa)) is disordered. The segment covering 23–48 (LPAKKAAKKAPARKTPAKKAPAKKTP) has biased composition (basic residues). The chain crosses the membrane as a helical span at residues 111-128 (PVPLIVAVTLSLLALLLI).

Homodimer in solution. Is probably able to self-associate in higher oligomers along the DNA molecules. Interacts with the N-terminal region of Wag31.

Its subcellular location is the cell inner membrane. With respect to regulation, can interact directly in vitro with the compound agrimophol, a phloroglucinol from the A.pilosa plant, whose extracts have been used in traditional Chinese medicine to treat pulmonary infections. Interaction with agrimophol leads to disruption of Rv3852's DNA binding function. Its function is as follows. Binds DNA in vitro. It has been proposed that Rv3852 plays a role in nucleoid organization and may function as an anchorage to tether the DNA to the membrane. However, it was later shown that it has no influence on nucleoid shape or compaction. It plays no role in virulence and only a minor role in the control of transcription, and does not appear to function as a typical nucleoid-associated protein. In terms of biological role, interacts with Wag31, an important cell shape and cell wall integrity determinant, and facilitates the localization of Wag31 to the cell poles and the cell wall, thus enabling nascent peptidoglycan synthesis. This is Histone-like protein Rv3852 from Mycobacterium tuberculosis (strain ATCC 25618 / H37Rv).